Consider the following 251-residue polypeptide: Flap endonuclease Xni (251 aa).

Asp104 is a binding site for Mg(2+). The 5'-3' exonuclease domain maps to 160-249; the sequence is VQPQQLPDYW…IDGNLQQLRL (90 aa). K(+)-binding residues include Leu171, Ala172, Pro180, Val182, and Ile185. The interaction with DNA stretch occupies residues 184-189; the sequence is GIGPKS.

Belongs to the Xni family. Mg(2+) serves as cofactor. It depends on K(+) as a cofactor.

In terms of biological role, has flap endonuclease activity. During DNA replication, flap endonucleases cleave the 5'-overhanging flap structure that is generated by displacement synthesis when DNA polymerase encounters the 5'-end of a downstream Okazaki fragment. The protein is Flap endonuclease Xni of Shigella flexneri serotype 5b (strain 8401).